We begin with the raw amino-acid sequence, 240 residues long: DNA repair protein RecO (240 aa).

This sequence belongs to the RecO family.

Involved in DNA repair and RecF pathway recombination. This is DNA repair protein RecO from Wolbachia sp. subsp. Drosophila simulans (strain wRi).